The sequence spans 1653 residues: Protein strawberry notch (1653 aa).

5 disordered regions span residues 1–46 (MTSK…GRDL), 190–211 (GSPAARSSGNAGTTGSSQGGAI), 237–265 (GSNAPPPPPPSTAANSVRHSPTGGIPNPG), 317–345 (NNQKPPPIATTPGSGGPAGGAPGSGVKGN), and 883–1043 (SVAD…PSGS). Over residues 11-36 (DADDDNDNFDEDDSGSDFDDDEDPDQ) the composition is skewed to acidic residues. 2 positions are modified to phosphoserine: Ser-24 and Ser-26. Over residues 194 to 205 (ARSSGNAGTTGS) the composition is skewed to polar residues. The span at 256–265 (SPTGGIPNPG) shows a compositional bias: low complexity. Over residues 329-342 (GSGGPAGGAPGSGV) the composition is skewed to gly residues. Over residues 883 to 901 (SVADSTSSLSNNSNITTAA) the composition is skewed to low complexity. 2 positions are modified to phosphoserine: Ser-929 and Ser-931. Acidic residues predominate over residues 966–975 (IDDEDEDHDV). The segment covering 980–998 (RSVASDASSDFNPFFSGSD) has biased composition (polar residues). The span at 1008 to 1027 (RSKKSKKAQKKSKKKVKKEK) shows a compositional bias: basic residues. The stretch at 1064–1125 (LSTQDKIQDL…RKIERLGARL (62 aa)) forms a coiled coil.

It belongs to the SBNO family. Interacts with vg for function in the wing disk. Interacts with Su(H) for function in the eye disk. At stage 8, when the formation of the midline precursor cells depends on Notch signaling, high level of expression is seen in the midline precursor cells and a lower level in the surrounding epidermal cells. Between stages 11 and 14, expression is uniform throughout the epidermis, and at stage 16, high level of expression is restricted to the central nervous system. Expressed in the larval leg, wing and eye imaginal disks. Expression is over the wing disk and accumulates within the pleural region.

Its subcellular location is the nucleus. Its function is as follows. Notch pathway component, may contribute to the specificity between lateral and inductive Notch signaling pathways in the wing disk. Required during many developmental stages including oogenesis, embryogenesis and imaginal development of the eye, wing and leg. Ebi and sno regulate EGFR-dependent Delta transcription in the developing eye, by antagonizing a repressor function of Suppressor of Hairless (Su(H)). They are required in the R-cells for normal cone cell development. This is Protein strawberry notch from Drosophila melanogaster (Fruit fly).